Reading from the N-terminus, the 402-residue chain is 3-dehydroquinate synthase (402 aa).

The protein belongs to the archaeal-type DHQ synthase family.

It catalyses the reaction 2-amino-2,3,7-trideoxy-D-lyxo-hept-6-ulosonate + NAD(+) + H2O = 3-dehydroquinate + NH4(+) + NADH + H(+). Functionally, catalyzes the oxidative deamination and cyclization of 2-amino-3,7-dideoxy-D-threo-hept-6-ulosonic acid (ADH) to yield 3-dehydroquinate (DHQ), which is fed into the canonical shikimic pathway of aromatic amino acid biosynthesis. This is 3-dehydroquinate synthase from Methanopyrus kandleri (strain AV19 / DSM 6324 / JCM 9639 / NBRC 100938).